Reading from the N-terminus, the 760-residue chain is Formin-like protein 8 (760 aa).

The signal sequence occupies residues 1–29; that stretch reads MAAMFNHPWPNLTLIYFFFIVVLPFQSLS. Over residues 52-63 the composition is skewed to pro residues; the sequence is PLLPPSSNPSPP. The interval 52-71 is disordered; that stretch reads PLLPPSSNPSPPSNNSSSSD. Residues 78-98 traverse the membrane as a helical segment; the sequence is AVLITAASTLLVAGVFFFCLQ. The segment at 204–313 is disordered; that stretch reads TEIPLLRGRS…VKLKPLHWDK (110 aa). The segment covering 253–274 has biased composition (pro residues); the sequence is TPSPPPPIKKGSSPSPPPPPPV. Residues 296–732 enclose the FH2 domain; sequence SGGETSKQVK…GSPISPSSQR (437 aa).

It belongs to the formin-like family. Class-I subfamily. Interacts with profilin.

It is found in the cell membrane. In terms of biological role, might be involved in the organization and polarity of the actin cytoskeleton. Interacts with the barbed end of actin filaments and nucleates actin-filament polymerization in vitro. The protein is Formin-like protein 8 (FH8) of Arabidopsis thaliana (Mouse-ear cress).